Here is a 416-residue protein sequence, read N- to C-terminus: Multifunctional CCA protein (416 aa).

Positions 8 and 11 each coordinate ATP. 2 residues coordinate CTP: glycine 8 and arginine 11. Mg(2+) contacts are provided by aspartate 21 and aspartate 23. Residues arginine 91, arginine 137, and arginine 140 each coordinate ATP. Arginine 91, arginine 137, and arginine 140 together coordinate CTP. In terms of domain architecture, HD spans threonine 228–tryptophan 329.

This sequence belongs to the tRNA nucleotidyltransferase/poly(A) polymerase family. Bacterial CCA-adding enzyme type 1 subfamily. Monomer. Can also form homodimers and oligomers. Mg(2+) serves as cofactor. It depends on Ni(2+) as a cofactor.

It carries out the reaction a tRNA precursor + 2 CTP + ATP = a tRNA with a 3' CCA end + 3 diphosphate. The enzyme catalyses a tRNA with a 3' CCA end + 2 CTP + ATP = a tRNA with a 3' CCACCA end + 3 diphosphate. Functionally, catalyzes the addition and repair of the essential 3'-terminal CCA sequence in tRNAs without using a nucleic acid template. Adds these three nucleotides in the order of C, C, and A to the tRNA nucleotide-73, using CTP and ATP as substrates and producing inorganic pyrophosphate. tRNA 3'-terminal CCA addition is required both for tRNA processing and repair. Also involved in tRNA surveillance by mediating tandem CCA addition to generate a CCACCA at the 3' terminus of unstable tRNAs. While stable tRNAs receive only 3'-terminal CCA, unstable tRNAs are marked with CCACCA and rapidly degraded. This is Multifunctional CCA protein from Shewanella sp. (strain MR-4).